The primary structure comprises 492 residues: Bifunctional purine biosynthesis protein PurH (492 aa).

Residues 1–144 (MRKALLSVSD…KNFRHVITVV (144 aa)) form the MGS-like domain.

It belongs to the PurH family.

The catalysed reaction is (6R)-10-formyltetrahydrofolate + 5-amino-1-(5-phospho-beta-D-ribosyl)imidazole-4-carboxamide = 5-formamido-1-(5-phospho-D-ribosyl)imidazole-4-carboxamide + (6S)-5,6,7,8-tetrahydrofolate. It carries out the reaction IMP + H2O = 5-formamido-1-(5-phospho-D-ribosyl)imidazole-4-carboxamide. Its pathway is purine metabolism; IMP biosynthesis via de novo pathway; 5-formamido-1-(5-phospho-D-ribosyl)imidazole-4-carboxamide from 5-amino-1-(5-phospho-D-ribosyl)imidazole-4-carboxamide (10-formyl THF route): step 1/1. It participates in purine metabolism; IMP biosynthesis via de novo pathway; IMP from 5-formamido-1-(5-phospho-D-ribosyl)imidazole-4-carboxamide: step 1/1. The polypeptide is Bifunctional purine biosynthesis protein PurH (Macrococcus caseolyticus (strain JCSC5402) (Macrococcoides caseolyticum)).